The sequence spans 336 residues: Protein ABHD13 (336 aa).

The chain crosses the membrane as a helical; Signal-anchor for type II membrane protein span at residues 37–57; the sequence is FNMYGGVILLLLIFVSIAGIL. Residues serine 193, aspartate 268, and histidine 298 each act as charge relay system in the active site. Residue asparagine 299 is glycosylated (N-linked (GlcNAc...) asparagine).

Belongs to the serine esterase family.

It localises to the membrane. The chain is Protein ABHD13 from Xenopus laevis (African clawed frog).